The following is a 51-amino-acid chain: Large ribosomal subunit protein eL39 (51 aa).

The protein belongs to the eukaryotic ribosomal protein eL39 family.

The chain is Large ribosomal subunit protein eL39 (rpl39e) from Thermoplasma acidophilum (strain ATCC 25905 / DSM 1728 / JCM 9062 / NBRC 15155 / AMRC-C165).